Here is a 157-residue protein sequence, read N- to C-terminus: Probable cyclic pyranopterin monophosphate synthase (157 aa).

Substrate-binding positions include 75-77 (MCH) and 111-112 (ME). Asp126 is an active-site residue.

It belongs to the MoaC family. Homohexamer; trimer of dimers.

The catalysed reaction is (8S)-3',8-cyclo-7,8-dihydroguanosine 5'-triphosphate = cyclic pyranopterin phosphate + diphosphate. The protein operates within cofactor biosynthesis; molybdopterin biosynthesis. Its function is as follows. Catalyzes the conversion of (8S)-3',8-cyclo-7,8-dihydroguanosine 5'-triphosphate to cyclic pyranopterin monophosphate (cPMP). This chain is Probable cyclic pyranopterin monophosphate synthase, found in Methanosarcina mazei (strain ATCC BAA-159 / DSM 3647 / Goe1 / Go1 / JCM 11833 / OCM 88) (Methanosarcina frisia).